Consider the following 878-residue polypeptide: NUT family member 2B (878 aa).

6 disordered regions span residues 273–324 (WSQG…DDSC), 417–512 (QKSQ…PEEI), 527–560 (LLGPSLGATGEPEKQREEGKVKQPQEEDWTPPDP), 624–693 (PPLK…GMAR), 709–757 (LRAA…EEEE), and 775–878 (WLPQ…HCSQ). 2 stretches are compositionally biased toward pro residues: residues 278 to 288 (PLPPPPPPAAQ) and 427 to 444 (CLPPPATPRLEPRGPPAP). Residues 476 to 487 (TKARRPPPRPHR) show a composition bias toward basic residues. Residues 537–551 (EPEKQREEGKVKQPQ) are compositionally biased toward basic and acidic residues.

Belongs to the NUT family.

This chain is NUT family member 2B (NUTM2B), found in Homo sapiens (Human).